Consider the following 173-residue polypeptide: Protein GrpE (173 aa).

The segment covering 1–20 (MQDEFKTDTPRTEAGSEKET) has biased composition (basic and acidic residues). Residues 1–23 (MQDEFKTDTPRTEAGSEKETMPS) are disordered.

It belongs to the GrpE family. As to quaternary structure, homodimer.

It localises to the cytoplasm. Participates actively in the response to hyperosmotic and heat shock by preventing the aggregation of stress-denatured proteins, in association with DnaK and GrpE. It is the nucleotide exchange factor for DnaK and may function as a thermosensor. Unfolded proteins bind initially to DnaJ; upon interaction with the DnaJ-bound protein, DnaK hydrolyzes its bound ATP, resulting in the formation of a stable complex. GrpE releases ADP from DnaK; ATP binding to DnaK triggers the release of the substrate protein, thus completing the reaction cycle. Several rounds of ATP-dependent interactions between DnaJ, DnaK and GrpE are required for fully efficient folding. In Thiobacillus denitrificans (strain ATCC 25259 / T1), this protein is Protein GrpE.